The chain runs to 159 residues: SsrA-binding protein (159 aa).

Residues 132–159 (KDFDKRHTEKERDSDREIQRAMRHGKDD) are disordered.

Belongs to the SmpB family.

It is found in the cytoplasm. Functionally, required for rescue of stalled ribosomes mediated by trans-translation. Binds to transfer-messenger RNA (tmRNA), required for stable association of tmRNA with ribosomes. tmRNA and SmpB together mimic tRNA shape, replacing the anticodon stem-loop with SmpB. tmRNA is encoded by the ssrA gene; the 2 termini fold to resemble tRNA(Ala) and it encodes a 'tag peptide', a short internal open reading frame. During trans-translation Ala-aminoacylated tmRNA acts like a tRNA, entering the A-site of stalled ribosomes, displacing the stalled mRNA. The ribosome then switches to translate the ORF on the tmRNA; the nascent peptide is terminated with the 'tag peptide' encoded by the tmRNA and targeted for degradation. The ribosome is freed to recommence translation, which seems to be the essential function of trans-translation. This chain is SsrA-binding protein, found in Pseudomonas aeruginosa (strain LESB58).